The following is a 485-amino-acid chain: Glutamyl-tRNA(Gln) amidotransferase subunit A (485 aa).

Active-site charge relay system residues include Lys79 and Ser154. The active-site Acyl-ester intermediate is Ser178.

This sequence belongs to the amidase family. GatA subfamily. Heterotrimer of A, B and C subunits.

The enzyme catalyses L-glutamyl-tRNA(Gln) + L-glutamine + ATP + H2O = L-glutaminyl-tRNA(Gln) + L-glutamate + ADP + phosphate + H(+). Functionally, allows the formation of correctly charged Gln-tRNA(Gln) through the transamidation of misacylated Glu-tRNA(Gln) in organisms which lack glutaminyl-tRNA synthetase. The reaction takes place in the presence of glutamine and ATP through an activated gamma-phospho-Glu-tRNA(Gln). This Geobacillus kaustophilus (strain HTA426) protein is Glutamyl-tRNA(Gln) amidotransferase subunit A.